The sequence spans 188 residues: Probable nicotinate-nucleotide adenylyltransferase (188 aa).

It belongs to the NadD family.

It catalyses the reaction nicotinate beta-D-ribonucleotide + ATP + H(+) = deamido-NAD(+) + diphosphate. It participates in cofactor biosynthesis; NAD(+) biosynthesis; deamido-NAD(+) from nicotinate D-ribonucleotide: step 1/1. In terms of biological role, catalyzes the reversible adenylation of nicotinate mononucleotide (NaMN) to nicotinic acid adenine dinucleotide (NaAD). This is Probable nicotinate-nucleotide adenylyltransferase from Listeria monocytogenes serotype 4a (strain HCC23).